The chain runs to 226 residues: Phosphoribosylformylglycinamidine synthase subunit PurQ (226 aa).

Residues 4–226 enclose the Glutamine amidotransferase type-1 domain; it reads RIGVVTFPGS…TSILKKLVNA (223 aa). The active-site Nucleophile is Cys-87. Active-site residues include His-196 and Glu-198.

In terms of assembly, part of the FGAM synthase complex composed of 1 PurL, 1 PurQ and 2 PurS subunits.

It localises to the cytoplasm. The enzyme catalyses N(2)-formyl-N(1)-(5-phospho-beta-D-ribosyl)glycinamide + L-glutamine + ATP + H2O = 2-formamido-N(1)-(5-O-phospho-beta-D-ribosyl)acetamidine + L-glutamate + ADP + phosphate + H(+). The catalysed reaction is L-glutamine + H2O = L-glutamate + NH4(+). Its pathway is purine metabolism; IMP biosynthesis via de novo pathway; 5-amino-1-(5-phospho-D-ribosyl)imidazole from N(2)-formyl-N(1)-(5-phospho-D-ribosyl)glycinamide: step 1/2. Its function is as follows. Part of the phosphoribosylformylglycinamidine synthase complex involved in the purines biosynthetic pathway. Catalyzes the ATP-dependent conversion of formylglycinamide ribonucleotide (FGAR) and glutamine to yield formylglycinamidine ribonucleotide (FGAM) and glutamate. The FGAM synthase complex is composed of three subunits. PurQ produces an ammonia molecule by converting glutamine to glutamate. PurL transfers the ammonia molecule to FGAR to form FGAM in an ATP-dependent manner. PurS interacts with PurQ and PurL and is thought to assist in the transfer of the ammonia molecule from PurQ to PurL. This chain is Phosphoribosylformylglycinamidine synthase subunit PurQ, found in Streptomyces coelicolor (strain ATCC BAA-471 / A3(2) / M145).